A 653-amino-acid chain; its full sequence is Potassium voltage-gated channel subfamily A member 4 (653 aa).

Residues 1–304 (MEVAMVSAES…LLFEYPESSS (304 aa)) lie on the Cytoplasmic side of the membrane. The disordered stretch occupies residues 24–148 (QARARERERL…RFYYSEDDHG (125 aa)). The span at 36–52 (SRAAAAAAVAAATAAVE) shows a compositional bias: low complexity. Residues 81-97 (GSRRRRRQRSEKKKAHY) are compositionally biased toward basic residues. Ser90 carries the phosphoserine; by PKA modification. Residue Ser122 is modified to Phosphoserine. The span at 122 to 137 (SEEEEDEEEEEEEEEE) shows a compositional bias: acidic residues. A helical transmembrane segment spans residues 305–326 (PARGIAIVSVLVILISIVIFCL). The Extracellular segment spans residues 327–370 (ETLPEFRDDRDLVMALSAGGHGGLLNDTSAPHLENSGHTIFNDP). A glycan (N-linked (GlcNAc...) asparagine) is linked at Asn352. The chain crosses the membrane as a helical span at residues 371–392 (FFIVETVCIVWFSFEFVVRCFA). At 393–403 (CPSQALFFKNI) the chain is on the cytoplasmic side. A helical membrane pass occupies residues 404-424 (MNIIDIVSILPYFITLGTDLA). The Extracellular segment spans residues 425–439 (QQQGGGNGQQQQAMS). Residues 440–460 (FAILRIIRLVRVFRIFKLSRH) traverse the membrane as a helical; Voltage-sensor segment. Residues 461–475 (SKGLQILGHTLRASM) lie on the Cytoplasmic side of the membrane. The segment at 462 to 475 (KGLQILGHTLRASM) is S4-S5 linker. The helical transmembrane segment at 476-497 (RELGLLIFFLFIGVILFSSAVY) threads the bilayer. Topologically, residues 498 to 511 (FAEADEPTTHFQSI) are extracellular. An intramembrane region (helical) is located at residues 512–523 (PDAFWWAVVTMT). The short motif at 524-529 (TVGYGD) is the Selectivity filter element. An intramembrane segment occupies 524 to 531 (TVGYGDMK). Over 532–538 (PITVGGK) the chain is Extracellular. Residues 539 to 567 (IVGSLCAIAGVLTIALPVPVIVSNFNYFY) traverse the membrane as a helical segment. Over 568-653 (HRETENEEQT…SNAKAVETDV (86 aa)) the chain is Cytoplasmic. Ser599 carries the phosphoserine; by PKA modification. The segment covering 629–640 (CQGKGDDSETDK) has biased composition (basic and acidic residues). Residues 629–653 (CQGKGDDSETDKNNCSNAKAVETDV) form a disordered region. Residues 651 to 653 (TDV) carry the PDZ-binding motif.

The protein belongs to the potassium channel family. A (Shaker) (TC 1.A.1.2) subfamily. Kv1.4/KCNA4 sub-subfamily. As to quaternary structure, homotetramer and heterotetramer of potassium channel proteins. Interacts with KCNAB1 and KCNAB2. Interacts with DLG1, DLG2 and DLG4 via their PDZ domains. Interacts with SIGMAR1. Detected in a complex with KCNA1. Interacts with KCNA2. Part of a complex containing KCNA1, KCNAB1 and LGI1. Interacts (via cytoplasmic N-terminal domain) with KCNRG. Expressed in brain, and at lower levels in the testis, lung, kidney, colon and heart. Detected in heart ventricle.

The protein resides in the cell membrane. The protein localises to the cell projection. It is found in the axon. It catalyses the reaction K(+)(in) = K(+)(out). Inhibited by 4-aminopyridine (4-AP), but not by tetraethylammonium (TEA) and charybdotoxin (CTX). Functionally, voltage-gated potassium channel that mediates transmembrane potassium transport in excitable membranes. Forms tetrameric potassium-selective channels through which potassium ions pass in accordance with their electrochemical gradient. The channel alternates between opened and closed conformations in response to the voltage difference across the membrane. Can form functional homotetrameric channels and heterotetrameric channels that contain variable proportions of KCNA1, KCNA2, KCNA4, KCNA5, and possibly other family members as well; channel properties depend on the type of alpha subunits that are part of the channel. Channel properties are modulated by cytoplasmic beta subunits that regulate the subcellular location of the alpha subunits and promote rapid inactivation. In vivo, membranes probably contain a mixture of heteromeric potassium channel complexes, making it difficult to assign currents observed in intact tissues to any particular potassium channel family member. Homotetrameric KCNA4 forms a potassium channel that opens in response to membrane depolarization, followed by rapid spontaneous channel closure. Likewise, a heterotetrameric channel formed by KCNA1 and KCNA4 shows rapid inactivation. This is Potassium voltage-gated channel subfamily A member 4 (KCNA4) from Homo sapiens (Human).